Reading from the N-terminus, the 164-residue chain is Phosphopantetheine adenylyltransferase (164 aa).

Residue threonine 10 participates in substrate binding. ATP-binding positions include 10-11 (TF) and histidine 18. The substrate site is built by lysine 44, leucine 76, and arginine 90. Residues 91 to 93 (GLR), glutamate 101, and 126 to 132 (YAFISSS) contribute to the ATP site.

This sequence belongs to the bacterial CoaD family. Homohexamer. It depends on Mg(2+) as a cofactor.

The protein resides in the cytoplasm. It carries out the reaction (R)-4'-phosphopantetheine + ATP + H(+) = 3'-dephospho-CoA + diphosphate. It participates in cofactor biosynthesis; coenzyme A biosynthesis; CoA from (R)-pantothenate: step 4/5. Functionally, reversibly transfers an adenylyl group from ATP to 4'-phosphopantetheine, yielding dephospho-CoA (dPCoA) and pyrophosphate. The protein is Phosphopantetheine adenylyltransferase of Halorhodospira halophila (strain DSM 244 / SL1) (Ectothiorhodospira halophila (strain DSM 244 / SL1)).